The sequence spans 347 residues: Phenylalanine--tRNA ligase alpha subunit (347 aa).

Residue glutamate 265 participates in Mg(2+) binding.

This sequence belongs to the class-II aminoacyl-tRNA synthetase family. Phe-tRNA synthetase alpha subunit type 1 subfamily. As to quaternary structure, tetramer of two alpha and two beta subunits. Mg(2+) is required as a cofactor.

The protein localises to the cytoplasm. It catalyses the reaction tRNA(Phe) + L-phenylalanine + ATP = L-phenylalanyl-tRNA(Phe) + AMP + diphosphate + H(+). The sequence is that of Phenylalanine--tRNA ligase alpha subunit from Wolbachia pipientis wMel.